The sequence spans 1164 residues: Receptor-like protein kinase BRI1-like 3 (1164 aa).

An N-terminal signal peptide occupies residues 1 to 23 (MKQQWQFLILCLLVLFLTVDSRG). The Extracellular portion of the chain corresponds to 24 to 772 (RRLLSDDVND…RSHAHPKKQS (749 aa)). Asparagine 32 is a glycosylation site (N-linked (GlcNAc...) asparagine). Residues 65–72 (CTWRGVSC) carry the Cys pair 1 motif. LRR repeat units lie at residues 77-98 (RVIG…NNLT), 102-123 (NLRS…SSSG), 125-146 (SLEV…DYVF), 151-173 (NLVS…PSAS), 176-197 (RITT…TFIA), 202-224 (SLKH…SFGL), 227-248 (NLTV…VSLS), 252-274 (LLET…DYWG), 278-300 (NLRQ…LSLL), 303-325 (TLEV…FTSC), 327-347 (SLQS…STVV), 352-375 (RITN…TNCS), 376-397 (NLRV…GFCS), 403-424 (VLEK…ELGK), 427-448 (SLKT…EIWT), 451-473 (KLSD…ICVD), 476-498 (NLET…ISKC), 500-523 (NMLW…GKLE), 524-546 (KLAI…LGNC), and 548-570 (NLIW…LASQ). N-linked (GlcNAc...) asparagine glycans are attached at residues asparagine 96 and asparagine 112. N-linked (GlcNAc...) asparagine glycosylation is present at asparagine 156. Residues asparagine 212, asparagine 227, and asparagine 257 are each glycosylated (N-linked (GlcNAc...) asparagine). Residues asparagine 362 and asparagine 373 are each glycosylated (N-linked (GlcNAc...) asparagine). Asparagine 461 carries an N-linked (GlcNAc...) asparagine glycan. N-linked (GlcNAc...) asparagine glycans are attached at residues asparagine 532, asparagine 558, and asparagine 638. LRR repeat units follow at residues 640 to 662 (SMIY…YGAM), 664 to 686 (YLQV…FGGL), 688 to 711 (AIGV…GGLS), and 712 to 734 (FLSD…GQLT). N-linked (GlcNAc...) asparagine glycosylation is found at asparagine 722 and asparagine 743. Positions 748 to 755 (CGVPLPPC) match the Cys pair 2 motif. Residues 773–793 (IATGMSAGIVFSFMCIVMLIM) traverse the membrane as a helical segment. Residues 794–1164 (ALYRARKVQK…LVEESRDKEP (371 aa)) are Cytoplasmic-facing. Threonine 847 and threonine 855 each carry phosphothreonine. Residues 858–1136 (FSADSMIGSG…QVMTMFKELV (279 aa)) enclose the Protein kinase domain. ATP-binding positions include 864 to 872 (IGSGGFGDV) and lysine 886. Tyrosine 931 is modified (phosphotyrosine). The active-site Proton acceptor is aspartate 985. A Phosphoserine modification is found at serine 1020. The residue at position 1028 (tyrosine 1028) is a Phosphotyrosine.

The protein belongs to the protein kinase superfamily. Ser/Thr protein kinase family. Autophosphorylated on Tyr and Thr residues. As to expression, predominantly expressed in vascular tissues. Expressed only during postembryonic development with a very discrete pattern of expression, preferentially in the two protophloem cell files at the elongation zone of the root. The expression in these two cell files attenuates as the phloem cells differentiate in the upper root. In cotyledons and leaves, it is expressed in phloem cells, starting at the cotyledons and shoot apex, moving toward the basal part of the leaves, where the expression is weak. Expressed in the secondary and tertiary veins and in the upper part of the cotyledons and leaves. Weakly or not expressed in the inflorescence stems. Has some complementary expression with BRL1.

The protein localises to the cell membrane. The catalysed reaction is L-seryl-[protein] + ATP = O-phospho-L-seryl-[protein] + ADP + H(+). It catalyses the reaction L-threonyl-[protein] + ATP = O-phospho-L-threonyl-[protein] + ADP + H(+). The enzyme catalyses L-tyrosyl-[protein] + ATP = O-phospho-L-tyrosyl-[protein] + ADP + H(+). Receptor with a dual specificity kinase activity acting on both serine/threonine- and tyrosine-containing substrates. Binds brassinolide. Regulates, in response to brassinosteroid binding, a signaling cascade involved in plant development. May be involved in cell growth and vascular differentiation. The chain is Receptor-like protein kinase BRI1-like 3 (BRL3) from Arabidopsis thaliana (Mouse-ear cress).